A 507-amino-acid chain; its full sequence is Probable DNA ligase (507 aa).

Glu-209 is an ATP binding site. Lys-211 acts as the N6-AMP-lysine intermediate in catalysis. The ATP site is built by Arg-216, Arg-231, Glu-260, Phe-295, Arg-366, and Lys-372.

The protein belongs to the ATP-dependent DNA ligase family. Requires Mg(2+) as cofactor.

The enzyme catalyses ATP + (deoxyribonucleotide)n-3'-hydroxyl + 5'-phospho-(deoxyribonucleotide)m = (deoxyribonucleotide)n+m + AMP + diphosphate.. DNA ligase that seals nicks in double-stranded DNA during DNA replication, DNA recombination and DNA repair. This is Probable DNA ligase from Pseudarthrobacter chlorophenolicus (strain ATCC 700700 / DSM 12829 / CIP 107037 / JCM 12360 / KCTC 9906 / NCIMB 13794 / A6) (Arthrobacter chlorophenolicus).